The sequence spans 283 residues: Bifunctional protein FolD (283 aa).

NADP(+) contacts are provided by residues 165-167 (GAS) and serine 190.

It belongs to the tetrahydrofolate dehydrogenase/cyclohydrolase family. Homodimer.

The enzyme catalyses (6R)-5,10-methylene-5,6,7,8-tetrahydrofolate + NADP(+) = (6R)-5,10-methenyltetrahydrofolate + NADPH. It carries out the reaction (6R)-5,10-methenyltetrahydrofolate + H2O = (6R)-10-formyltetrahydrofolate + H(+). Its pathway is one-carbon metabolism; tetrahydrofolate interconversion. In terms of biological role, catalyzes the oxidation of 5,10-methylenetetrahydrofolate to 5,10-methenyltetrahydrofolate and then the hydrolysis of 5,10-methenyltetrahydrofolate to 10-formyltetrahydrofolate. The polypeptide is Bifunctional protein FolD (Cupriavidus necator (strain ATCC 17699 / DSM 428 / KCTC 22496 / NCIMB 10442 / H16 / Stanier 337) (Ralstonia eutropha)).